Consider the following 56-residue polypeptide: UPF0434 protein WIGBR2520 (56 aa).

The protein belongs to the UPF0434 family.

The polypeptide is UPF0434 protein WIGBR2520 (Wigglesworthia glossinidia brevipalpis).